Reading from the N-terminus, the 445-residue chain is Trigger factor (445 aa).

In terms of domain architecture, PPIase FKBP-type spans 172–257; sequence GDQVVIDFVG…VKSVNWAHMP (86 aa).

This sequence belongs to the FKBP-type PPIase family. Tig subfamily.

The protein resides in the cytoplasm. It carries out the reaction [protein]-peptidylproline (omega=180) = [protein]-peptidylproline (omega=0). Involved in protein export. Acts as a chaperone by maintaining the newly synthesized protein in an open conformation. Functions as a peptidyl-prolyl cis-trans isomerase. This is Trigger factor from Polynucleobacter asymbioticus (strain DSM 18221 / CIP 109841 / QLW-P1DMWA-1) (Polynucleobacter necessarius subsp. asymbioticus).